A 518-amino-acid chain; its full sequence is 2-isopropylmalate synthase (518 aa).

Residues 4–266 form the Pyruvate carboxyltransferase domain; that stretch reads INVFDTTLRD…DSSLNLHELK (263 aa). Mn(2+)-binding residues include D13, H201, H203, and N237. The segment at 391-518 is regulatory domain; the sequence is EFLSLQVHYG…GLKRQTAVGS (128 aa).

Belongs to the alpha-IPM synthase/homocitrate synthase family. LeuA type 1 subfamily. As to quaternary structure, homodimer. It depends on Mn(2+) as a cofactor.

The protein localises to the cytoplasm. It carries out the reaction 3-methyl-2-oxobutanoate + acetyl-CoA + H2O = (2S)-2-isopropylmalate + CoA + H(+). It participates in amino-acid biosynthesis; L-leucine biosynthesis; L-leucine from 3-methyl-2-oxobutanoate: step 1/4. Its function is as follows. Catalyzes the condensation of the acetyl group of acetyl-CoA with 3-methyl-2-oxobutanoate (2-ketoisovalerate) to form 3-carboxy-3-hydroxy-4-methylpentanoate (2-isopropylmalate). This chain is 2-isopropylmalate synthase, found in Bacillus velezensis (strain DSM 23117 / BGSC 10A6 / LMG 26770 / FZB42) (Bacillus amyloliquefaciens subsp. plantarum).